Reading from the N-terminus, the 264-residue chain is Synaptophysin-like protein 2 (264 aa).

At 1-33 (MSSTESPSRAADKSPRQQVDRLLEGLRWRRLEE) the chain is on the cytoplasmic side. The region spanning 30–238 (RLEEPLGFIK…NCWFVFKETP (209 aa)) is the MARVEL domain. Residues 34-54 (PLGFIKVLQWLFAIFAFGSCG) traverse the membrane as a helical segment. Residues 55-116 (SYSGETGAMV…LMGDFSAPAE (62 aa)) are Vesicular-facing. A helical transmembrane segment spans residues 117–137 (FFVTLGIFSFFYTMAALVVYL). Residues 138–150 (RFHKLYTENKRFP) are Cytoplasmic-facing. Residues 151 to 171 (LVDFCVTVSFTFFWLVAAAAW) traverse the membrane as a helical segment. Residues 172-213 (GKGLTDVKGATRPSSLTAAMSVCHGEEAVCSAGATPSMGLAN) lie on the Vesicular side of the membrane. N213 carries N-linked (GlcNAc...) asparagine glycosylation. Residues 214–234 (ISVLFGFINFFLWAGNCWFVF) traverse the membrane as a helical segment. Residues 235–264 (KETPWHGQGQDQGQGPSQESAAEQGAVEKQ) lie on the Cytoplasmic side of the membrane. A disordered region spans residues 242–264 (QGQDQGQGPSQESAAEQGAVEKQ).

This sequence belongs to the synaptophysin/synaptobrevin family. Skeletal muscle.

Its subcellular location is the membrane. Its function is as follows. Involved in communication between the T-tubular and junctional sarcoplasmic reticulum (SR) membranes. The polypeptide is Synaptophysin-like protein 2 (SYPL2) (Oryctolagus cuniculus (Rabbit)).